Consider the following 161-residue polypeptide: MRIEKCYFCSAPVYPGHGMMFVRNDCKVFRFCRSKCHKNFKKKRNPRKTRWTKAFRKSAGKELTVDNSLEFEKRRNTPVKYNRELWSKTVEAMRKVESIKHKRQARFIMNRLKKGKELEKAADISEVKKNIHLIKAPHAGQAKQLEDKMVQKLAEDVEMDE.

It belongs to the eukaryotic ribosomal protein eL24 family. As to quaternary structure, associated with nucleolar and cytoplasmic pre-60S particles. At the end of biogenesis it dissociates from cytoplasmic pre-60S particles and is likely to be exchanged for its ribosomal homolog, RPL24.

It is found in the nucleus. Its subcellular location is the nucleolus. Functionally, involved in the biogenesis of the 60S ribosomal subunit. Ensures the docking of GTPBP4/NOG1 to pre-60S particles. In Danio rerio (Zebrafish), this protein is Probable ribosome biogenesis protein RLP24 (rsl24d1).